Here is a 201-residue protein sequence, read N- to C-terminus: Large ribosomal subunit protein uL4 (201 aa).

A disordered region spans residues 43-71 (TRAQKTRSEVSGGGKKPWAQKGTGRARAG).

It belongs to the universal ribosomal protein uL4 family. Part of the 50S ribosomal subunit.

Functionally, one of the primary rRNA binding proteins, this protein initially binds near the 5'-end of the 23S rRNA. It is important during the early stages of 50S assembly. It makes multiple contacts with different domains of the 23S rRNA in the assembled 50S subunit and ribosome. Its function is as follows. Forms part of the polypeptide exit tunnel. The polypeptide is Large ribosomal subunit protein uL4 (Pseudoalteromonas translucida (strain TAC 125)).